The following is a 245-amino-acid chain: Probable transcriptional regulatory protein TP_0474 (245 aa).

This sequence belongs to the TACO1 family.

It is found in the cytoplasm. In Treponema pallidum (strain Nichols), this protein is Probable transcriptional regulatory protein TP_0474.